Consider the following 184-residue polypeptide: ATP synthase subunit b, chloroplastic (184 aa).

The chain crosses the membrane as a helical span at residues 27-49; that stretch reads LATNPINLSVVLGVLIFFGKGVL.

The protein belongs to the ATPase B chain family. F-type ATPases have 2 components, F(1) - the catalytic core - and F(0) - the membrane proton channel. F(1) has five subunits: alpha(3), beta(3), gamma(1), delta(1), epsilon(1). F(0) has four main subunits: a(1), b(1), b'(1) and c(10-14). The alpha and beta chains form an alternating ring which encloses part of the gamma chain. F(1) is attached to F(0) by a central stalk formed by the gamma and epsilon chains, while a peripheral stalk is formed by the delta, b and b' chains.

The protein resides in the plastid. It localises to the chloroplast thylakoid membrane. F(1)F(0) ATP synthase produces ATP from ADP in the presence of a proton or sodium gradient. F-type ATPases consist of two structural domains, F(1) containing the extramembraneous catalytic core and F(0) containing the membrane proton channel, linked together by a central stalk and a peripheral stalk. During catalysis, ATP synthesis in the catalytic domain of F(1) is coupled via a rotary mechanism of the central stalk subunits to proton translocation. Functionally, component of the F(0) channel, it forms part of the peripheral stalk, linking F(1) to F(0). This is ATP synthase subunit b, chloroplastic from Phalaenopsis aphrodite subsp. formosana (Moth orchid).